Reading from the N-terminus, the 96-residue chain is Carboxysome shell protein CsoS1A (96 aa).

Residues 7-92 (ALGMIETRGL…PHKEVEPVLT (86 aa)) enclose the BMC domain.

Belongs to the bacterial microcompartments protein family. CsoS1 subfamily. Homohexamer with a small central pore. Forms a CsoS2-CsoS1-RuBisCO complex.

It is found in the carboxysome. Its function is as follows. One of shell proteins of the carboxysome, a polyhedral inclusion where RuBisCO (ribulose bisphosphate carboxylase, ccbL-ccbS) is sequestered. Assembles into hexamers which make sheets that form the facets of the polyhedral carboxysome. The shell probably limits the diffusion of CO(2) into and out of the carboxysome. This Hydrogenovibrio crunogenus (strain DSM 25203 / XCL-2) (Thiomicrospira crunogena) protein is Carboxysome shell protein CsoS1A.